The chain runs to 197 residues: MEKFTTHTGVGVPLQRSNVDTDQIIPAVYLKRVTRTGFEDGLFSNWRQNDPNFVLNTETYKNGSVLIAGPDFGTGSSREHAVWALMDYGFRAVFSSRFADIFRGNSGKAGLLTGIMEQSDIELLWKLMEQTPGLELTVNLEKQIVTAGDVVISFEVDPYIRWRLMEGLDDAGLTLRKLDEIEDYEAKRPAFKPRTNA.

This sequence belongs to the LeuD family. LeuD type 1 subfamily. Heterodimer of LeuC and LeuD.

It catalyses the reaction (2R,3S)-3-isopropylmalate = (2S)-2-isopropylmalate. The protein operates within amino-acid biosynthesis; L-leucine biosynthesis; L-leucine from 3-methyl-2-oxobutanoate: step 2/4. Functionally, catalyzes the isomerization between 2-isopropylmalate and 3-isopropylmalate, via the formation of 2-isopropylmaleate. The chain is 3-isopropylmalate dehydratase small subunit from Corynebacterium glutamicum (strain R).